A 102-amino-acid polypeptide reads, in one-letter code: Small ribosomal subunit protein uS10 (102 aa).

It belongs to the universal ribosomal protein uS10 family. Part of the 30S ribosomal subunit.

Involved in the binding of tRNA to the ribosomes. The polypeptide is Small ribosomal subunit protein uS10 (Pelobacter propionicus (strain DSM 2379 / NBRC 103807 / OttBd1)).